We begin with the raw amino-acid sequence, 197 residues long: Large ribosomal subunit protein bL17 (197 aa).

Residues 136 to 197 (RAAKKADAPQ…DAEKSSDTEK (62 aa)) are disordered. The span at 148-187 (VADEATDADESVEDEAPAQDDSADEVEAAADETPADDAEA) shows a compositional bias: acidic residues. Over residues 188 to 197 (DAEKSSDTEK) the composition is skewed to basic and acidic residues.

This sequence belongs to the bacterial ribosomal protein bL17 family. As to quaternary structure, part of the 50S ribosomal subunit. Contacts protein L32.

The polypeptide is Large ribosomal subunit protein bL17 (Beutenbergia cavernae (strain ATCC BAA-8 / DSM 12333 / CCUG 43141 / JCM 11478 / NBRC 16432 / NCIMB 13614 / HKI 0122)).